The sequence spans 257 residues: Imidazole glycerol phosphate synthase subunit HisF (257 aa).

Catalysis depends on residues Asp-12 and Asp-131.

Belongs to the HisA/HisF family. Heterodimer of HisH and HisF.

The protein localises to the cytoplasm. It carries out the reaction 5-[(5-phospho-1-deoxy-D-ribulos-1-ylimino)methylamino]-1-(5-phospho-beta-D-ribosyl)imidazole-4-carboxamide + L-glutamine = D-erythro-1-(imidazol-4-yl)glycerol 3-phosphate + 5-amino-1-(5-phospho-beta-D-ribosyl)imidazole-4-carboxamide + L-glutamate + H(+). Its pathway is amino-acid biosynthesis; L-histidine biosynthesis; L-histidine from 5-phospho-alpha-D-ribose 1-diphosphate: step 5/9. In terms of biological role, IGPS catalyzes the conversion of PRFAR and glutamine to IGP, AICAR and glutamate. The HisF subunit catalyzes the cyclization activity that produces IGP and AICAR from PRFAR using the ammonia provided by the HisH subunit. The protein is Imidazole glycerol phosphate synthase subunit HisF of Nocardia farcinica (strain IFM 10152).